Reading from the N-terminus, the 192-residue chain is MINKTLLGLSLGALMFTAGSAVAADYKIDKEGQHAFIEFRIKHLGYSWLYGSFNDFDGSFTFDDKNPAADKVNVVINTNSVDTNHAERDKHLRGKSFLNVAKFPQATFESTEVKKNGDGYSVIGNLTLNGVTKPVTLESKLTGQGNDPWGGYRAGFEANGNIKLKDFNITTDLGPASQEVELILSVEGVQVK.

The N-terminal stretch at 1–23 (MINKTLLGLSLGALMFTAGSAVA) is a signal peptide.

It belongs to the UPF0312 family. Type 1 subfamily.

The protein resides in the periplasm. The chain is UPF0312 protein YPK_1931 from Yersinia pseudotuberculosis serotype O:3 (strain YPIII).